Reading from the N-terminus, the 471-residue chain is UDP-N-acetylmuramoylalanine--D-glutamate ligase (471 aa).

G122–T128 contributes to the ATP binding site.

Belongs to the MurCDEF family.

It is found in the cytoplasm. It carries out the reaction UDP-N-acetyl-alpha-D-muramoyl-L-alanine + D-glutamate + ATP = UDP-N-acetyl-alpha-D-muramoyl-L-alanyl-D-glutamate + ADP + phosphate + H(+). Its pathway is cell wall biogenesis; peptidoglycan biosynthesis. In terms of biological role, cell wall formation. Catalyzes the addition of glutamate to the nucleotide precursor UDP-N-acetylmuramoyl-L-alanine (UMA). The protein is UDP-N-acetylmuramoylalanine--D-glutamate ligase of Streptomyces coelicolor (strain ATCC BAA-471 / A3(2) / M145).